We begin with the raw amino-acid sequence, 132 residues long: Fluoride-specific ion channel FluC (132 aa).

4 helical membrane-spanning segments follow: residues 6 to 26 (VLQL…RFIV), 41 to 61 (GTLV…ILMI), 73 to 93 (FLIV…FETY), and 104 to 124 (AMLN…LGIW). 2 residues coordinate Na(+): G80 and T83.

This sequence belongs to the fluoride channel Fluc/FEX (TC 1.A.43) family.

It is found in the cell inner membrane. The enzyme catalyses fluoride(in) = fluoride(out). With respect to regulation, na(+) is not transported, but it plays an essential structural role and its presence is essential for fluoride channel function. In terms of biological role, fluoride-specific ion channel. Important for reducing fluoride concentration in the cell, thus reducing its toxicity. In Hydrogenovibrio crunogenus (strain DSM 25203 / XCL-2) (Thiomicrospira crunogena), this protein is Fluoride-specific ion channel FluC.